Here is a 932-residue protein sequence, read N- to C-terminus: Probable UDP-N-acetylglucosamine--peptide N-acetylglucosaminyltransferase SPINDLY (932 aa).

The segment covering 1-15 (MAWTEKDVENGKESD) has biased composition (basic and acidic residues). The tract at residues 1-39 (MAWTEKDVENGKESDSLGNNGFLKGVQSSSDSKGSPVRI) is disordered. TPR repeat units follow at residues 48-81 (GKDAITYANILRSRNKFVDALAIYESVLQKDSGS), 82-115 (IESLIGKGICLQMQNMGRLAFESFAEAIKLDPQN), 116-149 (ACALTHCGILYKDEGRLVEAAESYQKALKADPSY), 157-190 (AIVLTDIGTSLKLAGNSQEGIQKYYEAIKIDSHY), 191-224 (APAYYNLGVVYSEMMQYDMALNCYEKAAIERPMY), 225-258 (AEAYCNMGVIYKNRGDLESAIACYERCLAVSPNF), 266-299 (AIALTDLGTKVKLEGDINQGVAYYKKALYYNWHY), 300-333 (ADAMYNLGVAYGEMLKFDMAIVFYELAFHFNPHC), 334-367 (AEACNNLGVIYKDRDNLDKAVECYQMALTIKPNF), 369-401 (QSLNNLGVVYTVQGKMDAAASMIEKAIIANPTY), and 402-435 (AEAYNNLGVLYRDAGNISLAIEAYEQCLKIDPDS). Positions 436 to 932 (RNAGQNRLLA…NQAGNPGKQS (497 aa)) are catalytic region. Positions 881 to 902 (VSPIEKTRISASKDGPIKENGF) are disordered.

This sequence belongs to the glycosyltransferase 41 family. O-GlcNAc transferase subfamily. Expressed in stems, leaves and flowers. Expressed during all stages of corolla maturation.

It localises to the nucleus. The enzyme catalyses L-seryl-[protein] + UDP-N-acetyl-alpha-D-glucosamine = 3-O-(N-acetyl-beta-D-glucosaminyl)-L-seryl-[protein] + UDP + H(+). The catalysed reaction is L-threonyl-[protein] + UDP-N-acetyl-alpha-D-glucosamine = 3-O-(N-acetyl-beta-D-glucosaminyl)-L-threonyl-[protein] + UDP + H(+). It participates in protein modification; protein glycosylation. Probable O-linked N-acetylglucosamine transferase (OGT) involved in various processes such as gibberellin (GA) signaling pathway. OGTs catalyze the addition of nucleotide-activated sugars directly onto the polypeptide through O-glycosidic linkage with the hydroxyl of serine or threonine. Probably acts by adding O-linked sugars to yet unknown proteins. The protein is Probable UDP-N-acetylglucosamine--peptide N-acetylglucosaminyltransferase SPINDLY (SPY) of Petunia hybrida (Petunia).